The sequence spans 577 residues: Proline--tRNA ligase (577 aa).

The protein belongs to the class-II aminoacyl-tRNA synthetase family. ProS type 1 subfamily. As to quaternary structure, homodimer.

The protein localises to the cytoplasm. It carries out the reaction tRNA(Pro) + L-proline + ATP = L-prolyl-tRNA(Pro) + AMP + diphosphate. Functionally, catalyzes the attachment of proline to tRNA(Pro) in a two-step reaction: proline is first activated by ATP to form Pro-AMP and then transferred to the acceptor end of tRNA(Pro). As ProRS can inadvertently accommodate and process non-cognate amino acids such as alanine and cysteine, to avoid such errors it has two additional distinct editing activities against alanine. One activity is designated as 'pretransfer' editing and involves the tRNA(Pro)-independent hydrolysis of activated Ala-AMP. The other activity is designated 'posttransfer' editing and involves deacylation of mischarged Ala-tRNA(Pro). The misacylated Cys-tRNA(Pro) is not edited by ProRS. The polypeptide is Proline--tRNA ligase (Helicobacter pylori (strain P12)).